Reading from the N-terminus, the 167-residue chain is Caffeine dehydrogenase subunit gamma (167 aa).

Positions 4–80 constitute a 2Fe-2S ferredoxin-type domain; the sequence is HVISLTVNGQ…GHSIRTVEAL (77 aa). 4 residues coordinate [2Fe-2S] cluster: Cys42, Cys47, Cys50, and Cys62.

Heterotrimer composed of an alpha (CdhA), a beta (CdhB) and a gamma (CdhC) subunit.

The catalysed reaction is caffeine + a ubiquinone + H2O = 1,3,7-trimethylurate + a ubiquinol. It catalyses the reaction ubiquinone-0 + caffeine + H2O = ubiquinol-0 + 1,3,7-trimethylurate. It carries out the reaction theobromine + a ubiquinone + H2O = 3,7-dimethylurate + a ubiquinol. Functionally, component of the caffeine dehydrogenase complex that catalyzes the hydrolytical oxidation of 1,3,7-trimethylxanthine (caffeine) by incorporation of an oxygen atom originating from a water molecule into position C-8 to produce 1,3,7-trimethyluric acid (TMU). Coenzyme Q0 (ubiquinone-0) is the preferred electron acceptor and, to a lesser extent, coenzyme Q2 (ubiquinone-2) can also be used, but oxygen and NAD(P)(+) cannot. Is involved in a caffeine degradation pathway that allows Pseudomonas sp. strain CBB1 to grow on caffeine as the sole carbon and nitrogen source. Is also active with theobromine as substrate, but shows a very poor activity with theophylline and is not active with xanthine, 3-methylxanthine, 7-methylxanthine, TMU, and 3,7-dimethylurate. This chain is Caffeine dehydrogenase subunit gamma, found in Pseudomonas sp. (strain CBB1).